The chain runs to 529 residues: Probable threonine/serine exporter (529 aa).

Helical transmembrane passes span 88–108, 168–188, 212–232, 234–254, 265–285, 312–332, 344–364, 365–385, 389–409, and 428–448; these read ITVTTIIVSALATTDTPPVTI, FALGVAMLLGGTWLTCVLAAV, VFGAGIATLVAVAAYLIAGQD, TALVATGIVVLLSGMTLVGSM, ALARLGDALFLTAGIVVGILI, MPLPILVAVSGAALSGVCLTI, AGLSAGLAELVLIGLGAAGFG, RVVATWTAAIGVGFLATLISI, APALVTATAGIMPMLPGLAVF, and LLEAAATALALGSGVVLGEFL. The segment at 482 to 501 is disordered; the sequence is QPAKSQQPTGTGGQRWRSVA.

Belongs to the ThrE exporter (TC 2.A.79) family.

It localises to the cell membrane. The catalysed reaction is L-threonine(in) + H(+)(out) = L-threonine(out) + H(+)(in). In terms of biological role, catalyzes the export of L-threonine and L-serine from the cell to the extracellular environment. Export is dependent on the proton motive force. Required for in vitro growth and survival of bacteria inside macrophages. Increased expression is associated with low-level amikacin (AMK) resistance. The polypeptide is Probable threonine/serine exporter (Mycobacterium tuberculosis (strain ATCC 25618 / H37Rv)).